The chain runs to 356 residues: UDP-N-acetylglucosamine--N-acetylmuramyl-(pentapeptide) pyrophosphoryl-undecaprenol N-acetylglucosamine transferase (356 aa).

Residues 11 to 13 (TGG), N123, R159, S187, I241, 260 to 265 (ALTVAE), and Q286 each bind UDP-N-acetyl-alpha-D-glucosamine.

The protein belongs to the glycosyltransferase 28 family. MurG subfamily.

Its subcellular location is the cell inner membrane. The catalysed reaction is di-trans,octa-cis-undecaprenyl diphospho-N-acetyl-alpha-D-muramoyl-L-alanyl-D-glutamyl-meso-2,6-diaminopimeloyl-D-alanyl-D-alanine + UDP-N-acetyl-alpha-D-glucosamine = di-trans,octa-cis-undecaprenyl diphospho-[N-acetyl-alpha-D-glucosaminyl-(1-&gt;4)]-N-acetyl-alpha-D-muramoyl-L-alanyl-D-glutamyl-meso-2,6-diaminopimeloyl-D-alanyl-D-alanine + UDP + H(+). The protein operates within cell wall biogenesis; peptidoglycan biosynthesis. Its function is as follows. Cell wall formation. Catalyzes the transfer of a GlcNAc subunit on undecaprenyl-pyrophosphoryl-MurNAc-pentapeptide (lipid intermediate I) to form undecaprenyl-pyrophosphoryl-MurNAc-(pentapeptide)GlcNAc (lipid intermediate II). The polypeptide is UDP-N-acetylglucosamine--N-acetylmuramyl-(pentapeptide) pyrophosphoryl-undecaprenol N-acetylglucosamine transferase (Azoarcus sp. (strain BH72)).